The sequence spans 59 residues: UPF0434 protein Shewmr7_2490 (59 aa).

It belongs to the UPF0434 family.

The chain is UPF0434 protein Shewmr7_2490 from Shewanella sp. (strain MR-7).